The following is a 313-amino-acid chain: MNGVWIEVRVITSCEAIEPISGIFYGLNSQGVAVEDPNDLLTRDQGPLTWDFADINVLEHKGEFAVVKAYFSGDDDLEKIVSITKEKVKEIQEMGIDIGKGIVECDKIKEEDWANNWKKYYKPSNITDRIVVKPMWEEYLPKNEELVIELDPGMAFGTGTHETTRMCVKALEKYVEHDSTVFDVGCGSGILAIAAAKLGAKLALGVDLDPVAVESAKENVGLNDLDNIEILEGNLLDVIDGKADIVVANIIAEIICILTDDVSKALNKGGLFITSGIIHERVDMVTSKLDECGFEVMEVNKDGEWNCIVAKLK.

Residues T164, G185, D207, and N249 each contribute to the S-adenosyl-L-methionine site.

This sequence belongs to the methyltransferase superfamily. PrmA family.

The protein localises to the cytoplasm. The catalysed reaction is L-lysyl-[protein] + 3 S-adenosyl-L-methionine = N(6),N(6),N(6)-trimethyl-L-lysyl-[protein] + 3 S-adenosyl-L-homocysteine + 3 H(+). Functionally, methylates ribosomal protein L11. The sequence is that of Ribosomal protein L11 methyltransferase from Clostridium botulinum (strain Alaska E43 / Type E3).